The sequence spans 365 residues: Coxsackievirus and adenovirus receptor homolog (365 aa).

Residues 1–19 (MALLLCFVLLCGVADFTSS) form the signal peptide. 2 Ig-like C2-type domains span residues 20-136 (LSIT…FLLT) and 141-228 (PSGT…LRLD). At 20 to 238 (LSITTPEQRI…VVPPSNRAGT (219 aa)) the chain is on the extracellular side. 3 cysteine pairs are disulfide-bonded: cysteine 41–cysteine 120, cysteine 146–cysteine 223, and cysteine 162–cysteine 212. A glycan (N-linked (GlcNAc...) asparagine) is linked at asparagine 106. The chain crosses the membrane as a helical span at residues 239 to 259 (IAGAVIGTLLALVLIGAILFC). 2 S-palmitoyl cysteine lipidation sites follow: cysteine 259 and cysteine 260. Residues 260–365 (CHKKRREEKY…PAQSKDGSIV (106 aa)) lie on the Cytoplasmic side of the membrane. The span at 269-282 (YEKEVHHDIREDVP) shows a compositional bias: basic and acidic residues. The disordered stretch occupies residues 269–315 (YEKEVHHDIREDVPPPKSRTSTARSYIGSNHSSLGSMSPSNMEGYSK). A compositionally biased stretch (polar residues) spans 286 to 315 (SRTSTARSYIGSNHSSLGSMSPSNMEGYSK). A phosphoserine mark is found at serine 297, serine 304, serine 306, serine 323, serine 332, and serine 363. The PDZ-binding motif lies at 360 to 365 (KDGSIV).

In terms of assembly, monomer. May form homodimer. Interacts with LNX, MAGI1, DLG4, PRKCABP, TJP1 and CTNNB1. Interacts with MPDZ; recruits MPDZ to intercellular contact sites. Interacts with JAML (homodimeric form). N-glycosylated. In terms of processing, palmitoylated on Cys-259 and/or Cys-260; required for proper localization to the plasma membrane. As to expression, expressed in heart, brain, spleen, lung, liver, muscle, kidney, testis, spleen and skeletal muscle.

Its subcellular location is the cell membrane. It localises to the basolateral cell membrane. It is found in the cell junction. The protein localises to the tight junction. The protein resides in the adherens junction. Functionally, component of the epithelial apical junction complex that may function as a homophilic cell adhesion molecule and is essential for tight junction integrity. Also involved in transepithelial migration of leukocytes through adhesive interactions with JAML a transmembrane protein of the plasma membrane of leukocytes. The interaction between both receptors also mediates the activation of gamma-delta T-cells, a subpopulation of T-cells residing in epithelia and involved in tissue homeostasis and repair. Upon epithelial CXADR-binding, JAML induces downstream cell signaling events in gamma-delta T-cells through PI3-kinase and MAP kinases. It results in proliferation and production of cytokines and growth factors by T-cells that in turn stimulate epithelial tissues repair. The protein is Coxsackievirus and adenovirus receptor homolog (Cxadr) of Rattus norvegicus (Rat).